The following is a 238-amino-acid chain: Purine nucleoside phosphorylase DeoD-type (238 aa).

Histidine 4 serves as a coordination point for a purine D-ribonucleoside. Phosphate contacts are provided by residues glycine 20, arginine 24, arginine 43, and 87–90; that span reads RVGS. A purine D-ribonucleoside contacts are provided by residues 179 to 181 and 203 to 204; these read EME and SD. The active-site Proton donor is the aspartate 204.

Belongs to the PNP/UDP phosphorylase family. In terms of assembly, homohexamer; trimer of homodimers.

It carries out the reaction a purine D-ribonucleoside + phosphate = a purine nucleobase + alpha-D-ribose 1-phosphate. The enzyme catalyses a purine 2'-deoxy-D-ribonucleoside + phosphate = a purine nucleobase + 2-deoxy-alpha-D-ribose 1-phosphate. Its function is as follows. Catalyzes the reversible phosphorolytic breakdown of the N-glycosidic bond in the beta-(deoxy)ribonucleoside molecules, with the formation of the corresponding free purine bases and pentose-1-phosphate. The polypeptide is Purine nucleoside phosphorylase DeoD-type (Histophilus somni (strain 129Pt) (Haemophilus somnus)).